The primary structure comprises 206 residues: Ribonuclease HII (206 aa).

Residues 18–206 form the RNase H type-2 domain; sequence LRIAGVDEVG…PVHNILYQEK (189 aa). Positions 24, 25, and 115 each coordinate a divalent metal cation.

It belongs to the RNase HII family. The cofactor is Mn(2+). It depends on Mg(2+) as a cofactor.

Its subcellular location is the cytoplasm. The enzyme catalyses Endonucleolytic cleavage to 5'-phosphomonoester.. In terms of biological role, endonuclease that specifically degrades the RNA of RNA-DNA hybrids. This chain is Ribonuclease HII, found in Dinoroseobacter shibae (strain DSM 16493 / NCIMB 14021 / DFL 12).